The chain runs to 443 residues: Cobyrinate a,c-diamide synthase (443 aa).

In terms of domain architecture, GATase cobBQ-type spans 248–433 (KIAVAYDKAF…LHNHAVANPY (186 aa)). C327 (nucleophile) is an active-site residue.

The protein belongs to the CobB/CbiA family. It depends on Mg(2+) as a cofactor.

The catalysed reaction is cob(II)yrinate + 2 L-glutamine + 2 ATP + 2 H2O = cob(II)yrinate a,c diamide + 2 L-glutamate + 2 ADP + 2 phosphate + 2 H(+). The enzyme catalyses Ni-sirohydrochlorin + 2 L-glutamine + 2 ATP + 2 H2O = Ni-sirohydrochlorin a,c-diamide + 2 L-glutamate + 2 ADP + 2 phosphate + 2 H(+). Its pathway is cofactor biosynthesis; adenosylcobalamin biosynthesis; cob(II)yrinate a,c-diamide from sirohydrochlorin (anaerobic route): step 10/10. Catalyzes the ATP-dependent amidation of the two carboxylate groups at positions a and c of cobyrinate, using either L-glutamine or ammonia as the nitrogen source. Involved in the biosynthesis of the unique nickel-containing tetrapyrrole coenzyme F430, the prosthetic group of methyl-coenzyme M reductase (MCR), which plays a key role in methanogenesis and anaerobic methane oxidation. Catalyzes the ATP-dependent amidation of the two carboxylate groups at positions a and c of Ni-sirohydrochlorin, using L-glutamine or ammonia as the nitrogen source. The chain is Cobyrinate a,c-diamide synthase from Methanocaldococcus jannaschii (strain ATCC 43067 / DSM 2661 / JAL-1 / JCM 10045 / NBRC 100440) (Methanococcus jannaschii).